Consider the following 391-residue polypeptide: 3-demethoxyubiquinol 3-hydroxylase (391 aa).

The protein belongs to the UbiH/COQ6 family. In terms of assembly, component of the Ubi complex metabolon, which regroups five ubiquinone biosynthesis proteins (UbiE, UbiF, UbiG, UbiH and UbiI) and two accessory factors (UbiK and the lipid-binding protein UbiJ). It depends on FAD as a cofactor.

It is found in the cytoplasm. It carries out the reaction a 5-methoxy-2-methyl-3-(all-trans-polyprenyl)benzene-1,4-diol + AH2 + O2 = a 3-demethylubiquinol + A + H2O. It functions in the pathway cofactor biosynthesis; ubiquinone biosynthesis. Functionally, catalyzes the hydroxylation of 2-octaprenyl-3-methyl-6-methoxy-1,4-benzoquinol during ubiquinone biosynthesis. This chain is 3-demethoxyubiquinol 3-hydroxylase (ubiF), found in Escherichia coli (strain K12).